The following is a 213-amino-acid chain: Phosphatidylserine decarboxylase proenzyme (213 aa).

The Schiff-base intermediate with substrate; via pyruvic acid role is filled by Ser182. The residue at position 182 (Ser182) is a Pyruvic acid (Ser); by autocatalysis.

This sequence belongs to the phosphatidylserine decarboxylase family. PSD-A subfamily. In terms of assembly, heterodimer of a large membrane-associated beta subunit and a small pyruvoyl-containing alpha subunit. It depends on pyruvate as a cofactor. In terms of processing, is synthesized initially as an inactive proenzyme. Formation of the active enzyme involves a self-maturation process in which the active site pyruvoyl group is generated from an internal serine residue via an autocatalytic post-translational modification. Two non-identical subunits are generated from the proenzyme in this reaction, and the pyruvate is formed at the N-terminus of the alpha chain, which is derived from the carboxyl end of the proenzyme. The post-translation cleavage follows an unusual pathway, termed non-hydrolytic serinolysis, in which the side chain hydroxyl group of the serine supplies its oxygen atom to form the C-terminus of the beta chain, while the remainder of the serine residue undergoes an oxidative deamination to produce ammonia and the pyruvoyl prosthetic group on the alpha chain.

It localises to the cell membrane. The catalysed reaction is a 1,2-diacyl-sn-glycero-3-phospho-L-serine + H(+) = a 1,2-diacyl-sn-glycero-3-phosphoethanolamine + CO2. Its pathway is phospholipid metabolism; phosphatidylethanolamine biosynthesis; phosphatidylethanolamine from CDP-diacylglycerol: step 2/2. Functionally, catalyzes the formation of phosphatidylethanolamine (PtdEtn) from phosphatidylserine (PtdSer). The sequence is that of Phosphatidylserine decarboxylase proenzyme from Chlorobium phaeobacteroides (strain BS1).